The primary structure comprises 606 residues: MTDAPVSRIRNFCIIAHIDHGKSTLADRLLQDTGTVANRDMQEQFLDNMDLERERGITIKLQAARMNYTATDGQQYVLNLIDTPGHVDFSYEVSRSLQACEGALLVVDASQGVEAQTLANVYLALDNDLEIIPVLNKIDLPGADPDRIKEEVEAIIGLDCDNAIPCSAKTGLGVPEILQAVVDRVPPPKDALEEPTKALIFDSYYDPYRGVIVYFRVMSGRISCKDKVLLMASKKTYELDEIGIMAPDQKKVDELHAGEVGYLAASIKAVADARVGDTITLLSAPADEALPGYTEAKPMVFCGLFPTEADQYPDLRDALDKLQLSDAALKYEPETSSAMGFGFRCGFLGLLHMEIVQERLEREYDLDLIVTAPSVIYKVNMIDGSEVMVDNPATLPDPQKRESIEEPYVKMEIYAPNEYNGALMGLCQERRGEYIDMKYITTDRVTLIYELPLAEVVTDFFDQMKTRTQGYASMEYSLIGYRKNQLVRLDVLINGERADALTTIVHQDKAYNVGKALVEKLKELIPRQQFKIPIQASIGSRIIASTSISAIRKDVLAKCYGGDISRKKKLLKKQAKGKKRMKAMGKVDVPQEAFMAVLKLNDGGGS.

One can recognise a tr-type G domain in the interval 7-189 (SRIRNFCIIA…AVVDRVPPPK (183 aa)). GTP contacts are provided by residues 19–24 (DHGKST) and 136–139 (NKID).

This sequence belongs to the TRAFAC class translation factor GTPase superfamily. Classic translation factor GTPase family. LepA subfamily.

Its subcellular location is the cell inner membrane. It carries out the reaction GTP + H2O = GDP + phosphate + H(+). Its function is as follows. Required for accurate and efficient protein synthesis under certain stress conditions. May act as a fidelity factor of the translation reaction, by catalyzing a one-codon backward translocation of tRNAs on improperly translocated ribosomes. Back-translocation proceeds from a post-translocation (POST) complex to a pre-translocation (PRE) complex, thus giving elongation factor G a second chance to translocate the tRNAs correctly. Binds to ribosomes in a GTP-dependent manner. The sequence is that of Elongation factor 4 from Parasynechococcus marenigrum (strain WH8102).